A 199-amino-acid chain; its full sequence is NAD(P)H dehydrogenase (quinone) (199 aa).

Positions 4–190 (VLVLYYSAYG…AGARYQGRQI (187 aa)) constitute a Flavodoxin-like domain. Residues 10–15 (SAYGHI) and 78–80 (TRF) contribute to the FMN site. Tyrosine 12 lines the NAD(+) pocket. Tryptophan 98 serves as a coordination point for substrate. Residues 113–119 (SSATQHG) and histidine 134 contribute to the FMN site.

It belongs to the WrbA family. FMN serves as cofactor.

It carries out the reaction a quinone + NADH + H(+) = a quinol + NAD(+). The catalysed reaction is a quinone + NADPH + H(+) = a quinol + NADP(+). The polypeptide is NAD(P)H dehydrogenase (quinone) (Bradyrhizobium diazoefficiens (strain JCM 10833 / BCRC 13528 / IAM 13628 / NBRC 14792 / USDA 110)).